Here is a 288-residue protein sequence, read N- to C-terminus: ATP synthase gamma chain (288 aa).

The protein belongs to the ATPase gamma chain family. In terms of assembly, F-type ATPases have 2 components, CF(1) - the catalytic core - and CF(0) - the membrane proton channel. CF(1) has five subunits: alpha(3), beta(3), gamma(1), delta(1), epsilon(1). CF(0) has three main subunits: a, b and c.

It is found in the cell inner membrane. Produces ATP from ADP in the presence of a proton gradient across the membrane. The gamma chain is believed to be important in regulating ATPase activity and the flow of protons through the CF(0) complex. This Vesicomyosocius okutanii subsp. Calyptogena okutanii (strain HA) protein is ATP synthase gamma chain.